Consider the following 629-residue polypeptide: Coiled-coil domain-containing protein 120 (629 aa).

Residues 31-70 (RLRGLLDRQRALQEALSVKLQELRKVCLQEAELTGQLPPE) form an involved in CYTH2-binding region. Residues 109-173 (ELALEALERE…LRDFRARLGL (65 aa)) adopt a coiled-coil conformation. Composition is skewed to low complexity over residues 209-219 (HSESSSLSESG) and 279-294 (ASPT…SASS). The segment at 209 to 356 (HSESSSLSES…LFAARTRRSN (148 aa)) is disordered. Over residues 323 to 332 (RQWSGSQDSQ) the composition is skewed to polar residues. Phosphoserine is present on residues serine 355 and serine 357. Disordered stretches follow at residues 399 to 432 (QPVP…GAPR) and 602 to 629 (PSQA…FTDG). Residues 418 to 432 (ARPSSAAPASRGAPR) are compositionally biased toward low complexity. Position 432 is an omega-N-methylarginine (arginine 432).

In terms of assembly, interacts with NIN and CEP170; leading to recruit them to centrosomes. Interacts with CYTH2; this interaction is direct and stabilizes CCDC120, possibly by preventing ubiquitination. Post-translationally, ubiquitinated; interaction with CYTH2 may prevent ubiquitination.

The protein localises to the cytoplasm. Its subcellular location is the cytoskeleton. The protein resides in the microtubule organizing center. It localises to the centrosome. It is found in the centriole. The protein localises to the cell projection. Its subcellular location is the neuron projection. The protein resides in the growth cone. It localises to the endosome. Centriolar protein required for centriole subdistal appendage assembly and microtubule anchoring in interphase cells. Together with CCDC68, cooperate with subdistal appendage components ODF2, NIN and CEP170 for hierarchical subdistal appendage assembly. Recruits NIN and CEP170 to centrosomes. Also required for neurite growth. Localizes CYTH2 to vesicles to allow its transport along neurites, and subsequent ARF6 activation and neurite growth. The sequence is that of Coiled-coil domain-containing protein 120 from Mus musculus (Mouse).